Consider the following 106-residue polypeptide: MAKTSPVVPPIKLSEPTESGNDTTETSGRLKHLFRDQPLIPIGCAATVGAFLFATRAIRRGDSMRANRFFRYRVLAQAATVLAIVGGVFMERKMKQEKRMEQITPK.

Positions 1 to 28 (MAKTSPVVPPIKLSEPTESGNDTTETSG) are disordered. The region spanning 9–102 (PPIKLSEPTE…KMKQEKRMEQ (94 aa)) is the HIG1 domain. Residues 16-27 (PTESGNDTTETS) are compositionally biased toward polar residues. 2 helical membrane passes run 39–58 (LIPI…TRAI) and 73–90 (RVLA…GVFM).

It belongs to the RCF1 family. Associates with the respiratory chain complex III/complex IV supercomplex.

It is found in the mitochondrion membrane. Functionally, cytochrome c oxidase subunit which plays a role in assembly of respiratory supercomplexes. The protein is Respiratory supercomplex factor 1, mitochondrial (rcf1) of Schizosaccharomyces japonicus (strain yFS275 / FY16936) (Fission yeast).